Reading from the N-terminus, the 259-residue chain is Chloroplastic group IIB intron splicing facilitator CRS2, chloroplastic (259 aa).

The segment at 1–21 is disordered; sequence MSLAVATPASARLSPLTTSSP. The transit peptide at 1–49 directs the protein to the chloroplast; sequence MSLAVATPASARLSPLTTSSPEPCRRRRLLLSAAAPLRRTRLRRRIAVV. Tyr-77 provides a ligand contact to tRNA. Catalysis depends on His-82, which acts as the Proton acceptor. TRNA contacts are provided by Tyr-127, Asn-129, and Asn-175.

The protein belongs to the PTH family. CRS2 subfamily. As to quaternary structure, part of large ribonucleo-protein complexes that include group IIB introns and either CAF1 or CAF2.

It is found in the plastid. Its subcellular location is the chloroplast stroma. Its function is as follows. Required for the splicing of group IIB introns in chloroplasts. The polypeptide is Chloroplastic group IIB intron splicing facilitator CRS2, chloroplastic (Oryza sativa subsp. japonica (Rice)).